Here is a 1159-residue protein sequence, read N- to C-terminus: WASH complex subunit 5 (1159 aa).

Phosphoserine is present on serine 917.

It belongs to the strumpellin family. As to quaternary structure, component of the WASH core complex also described as WASH regulatory complex (SHRC) composed of WASH (WASHC1, WASH2P or WASH3P), WASHC2 (WASHC2A or WASHC2C), WASHC3, WASHC4 and WASHC5. The WASH core complex associates via WASHC2 with the F-actin-capping protein dimer (formed by CAPZA1, CAPZA2 or CAPZA3 and CAPZB) in a transient or substoichiometric manner which was initially described as WASH complex. Interacts with VCP, PI4K2A.

The protein localises to the cytoplasm. The protein resides in the cytosol. It localises to the endoplasmic reticulum. It is found in the early endosome. Acts as a component of the WASH core complex that functions as a nucleation-promoting factor (NPF) at the surface of endosomes, where it recruits and activates the Arp2/3 complex to induce actin polymerization, playing a key role in the fission of tubules that serve as transport intermediates during endosome sorting. May be involved in axonal outgrowth. Involved in cellular localization of ADRB2. Involved in cellular trafficking of BLOC-1 complex cargos such as ATP7A and VAMP7. The protein is WASH complex subunit 5 of Pongo abelii (Sumatran orangutan).